A 371-amino-acid chain; its full sequence is Probable cysteine protease RDL5 (371 aa).

Residues 1-23 (MGYAKSAMLIFLLALVIASCATA) form the signal peptide. Positions 24 to 143 (MDMSVVSSND…NRYKTSDGDV (120 aa)) are cleaved as a propeptide — activation peptide. N-linked (GlcNAc...) asparagine glycosylation is present at N94. 3 disulfide bridges follow: C165–C206, C199–C239, and C298–C349. The active site involves C168. Residues H304 and N324 contribute to the active site.

Belongs to the peptidase C1 family. Expressed in roots, inflorescences and siliques.

Functionally, possesses protease activity in vitro. This Arabidopsis thaliana (Mouse-ear cress) protein is Probable cysteine protease RDL5.